Consider the following 267-residue polypeptide: NAD kinase (267 aa).

D45 (proton acceptor) is an active-site residue. Residues 45-46, 122-123, R148, D150, 161-166, A185, and Q223 contribute to the NAD(+) site; these read DG, NE, and TAYNKS.

Belongs to the NAD kinase family. The cofactor is a divalent metal cation.

Its subcellular location is the cytoplasm. The catalysed reaction is NAD(+) + ATP = ADP + NADP(+) + H(+). In terms of biological role, involved in the regulation of the intracellular balance of NAD and NADP, and is a key enzyme in the biosynthesis of NADP. Catalyzes specifically the phosphorylation on 2'-hydroxyl of the adenosine moiety of NAD to yield NADP. In Levilactobacillus brevis (strain ATCC 367 / BCRC 12310 / CIP 105137 / JCM 1170 / LMG 11437 / NCIMB 947 / NCTC 947) (Lactobacillus brevis), this protein is NAD kinase.